The chain runs to 371 residues: Glutamate 5-kinase 2 (371 aa).

K13 contributes to the ATP binding site. Positions 53, 140, and 152 each coordinate substrate. Residues 172–173 (SD) and 214–220 (TGGMRSK) contribute to the ATP site. The PUA domain occupies 280–356 (EGEMILSDDC…KELTNRALID (77 aa)).

The protein belongs to the glutamate 5-kinase family.

The protein resides in the cytoplasm. It catalyses the reaction L-glutamate + ATP = L-glutamyl 5-phosphate + ADP. It functions in the pathway amino-acid biosynthesis; L-proline biosynthesis; L-glutamate 5-semialdehyde from L-glutamate: step 1/2. Functionally, catalyzes the transfer of a phosphate group to glutamate to form L-glutamate 5-phosphate. The protein is Glutamate 5-kinase 2 (proJ) of Bacillus subtilis (strain 168).